A 106-amino-acid chain; its full sequence is Evasin P1168 (106 aa).

Residues methionine 1–alanine 24 form the signal peptide. Disulfide bonds link cysteine 45–cysteine 67, cysteine 49–cysteine 69, and cysteine 60–cysteine 80. N-linked (GlcNAc...) asparagine glycosylation is found at asparagine 48, asparagine 54, and asparagine 64.

It is found in the secreted. In terms of biological role, salivary chemokine-binding protein which binds to host chemokines CXCL1, CXCL2 and CXCL8. This is Evasin P1168 from Ixodes ricinus (Common tick).